We begin with the raw amino-acid sequence, 629 residues long: Probable potassium transport system protein Kup 3 (629 aa).

12 consecutive transmembrane segments (helical) span residues 20–40 (LSLSALGIVYGDIGTSPLYTF), 61–81 (VSLIIWTLIIIASVKYIHFAL), 106–126 (PFIIAVGLMGAALIYGDGTIT), 143–163 (PSLKYYVLPIAITILITLFAI), 171–191 (IGKAFGPVMAFWFLTIGILGA), 209–229 (GLSFLFSNGATGFFILCGVFL), 253–273 (WFGLAFPSLIFNYLGQAALVL), 291–311 (FLLPLIILSTVATIIASQAII), 343–363 (IYIGVVNWLLMLATLGLTIGF), 372–392 (AYGIAVSATMLCTTLLLFIAL), 400–420 (IITSGLVAGLFMIVDASFFAA), and 425–445 (FINGGYIPITLAIIIYSMMYI).

This sequence belongs to the HAK/KUP transporter (TC 2.A.72) family.

It is found in the cell inner membrane. It catalyses the reaction K(+)(in) + H(+)(in) = K(+)(out) + H(+)(out). In terms of biological role, transport of potassium into the cell. Likely operates as a K(+):H(+) symporter. In Legionella pneumophila subsp. pneumophila (strain Philadelphia 1 / ATCC 33152 / DSM 7513), this protein is Probable potassium transport system protein Kup 3.